We begin with the raw amino-acid sequence, 695 residues long: Nicastrin (695 aa).

Residues 1 to 22 (MEMRLNAASIWLLILSYGATIA) form the signal peptide. Residues 23–654 (QGERTRDKMY…IFLRPSNVHQ (632 aa)) lie on the Extracellular side of the membrane. 9 N-linked (GlcNAc...) asparagine glycosylation sites follow: N45, N108, N116, N138, N381, N461, N489, N585, and N609. A helical transmembrane segment spans residues 655–675 (VTTLSVGIVVLIISFCLVYII). Over 676–695 (SSRSEVLFEDLPASNAALFG) the chain is Cytoplasmic.

It belongs to the nicastrin family. Component of the gamma-secretase complex, a complex composed of a presenilin (Psn) homodimer, nicastrin (Nct), Aph-1 and Pen-2.

The protein localises to the membrane. In terms of biological role, essential subunit of the gamma-secretase complex, an endoprotease complex that catalyzes the intramembrane cleavage of integral membrane proteins such as Notch. It probably represents a stabilizing cofactor required for the assembly of the gamma-secretase complex. The chain is Nicastrin from Drosophila melanogaster (Fruit fly).